Reading from the N-terminus, the 64-residue chain is SPbeta prophage-derived uncharacterized protein YonP (64 aa).

This Bacillus subtilis (strain 168) protein is SPbeta prophage-derived uncharacterized protein YonP (yonP).